A 319-amino-acid chain; its full sequence is Beta-ketoacyl-[acyl-carrier-protein] synthase III (319 aa).

Catalysis depends on residues cysteine 113 and histidine 246. The interval 247-251 is ACP-binding; the sequence is QANLR. Asparagine 276 is an active-site residue.

This sequence belongs to the thiolase-like superfamily. FabH family. Homodimer.

The protein resides in the cytoplasm. The catalysed reaction is malonyl-[ACP] + acetyl-CoA + H(+) = 3-oxobutanoyl-[ACP] + CO2 + CoA. It participates in lipid metabolism; fatty acid biosynthesis. Its function is as follows. Catalyzes the condensation reaction of fatty acid synthesis by the addition to an acyl acceptor of two carbons from malonyl-ACP. Catalyzes the first condensation reaction which initiates fatty acid synthesis and may therefore play a role in governing the total rate of fatty acid production. Possesses both acetoacetyl-ACP synthase and acetyl transacylase activities. Its substrate specificity determines the biosynthesis of branched-chain and/or straight-chain of fatty acids. This chain is Beta-ketoacyl-[acyl-carrier-protein] synthase III, found in Chromobacterium violaceum (strain ATCC 12472 / DSM 30191 / JCM 1249 / CCUG 213 / NBRC 12614 / NCIMB 9131 / NCTC 9757 / MK).